Here is a 677-residue protein sequence, read N- to C-terminus: mRNA 3'-end-processing protein RNA14 (677 aa).

HAT repeat units lie at residues 56-88 (ESYAKVREVYEQFHNTFPFYSPAWTLQLKGELA), 90-124 (DEFETVEKILAQCLSGKLENNDLSLWSTYLDYIRR), 138-170 (VIVKAFQLVMQKCAIFEPKSSSFWNEYLNFLEQ), 181-214 (QRIDMLREFYKKMLCVPFDNLEKMWNRYTQWEQE), 257-289 (RTANKKNIPQPGTSDSNIQQLQIWLNWIKWERE), and 298-330 (MLSQRISYVYKQGIQYMIFSAEMWYDYSMYISE).

Component of the CFIA complex, which is composed of RNA14, RNA15, PCF11 and CLP1. Interacts with FIP1, PFS2, YSH1 and probably also with RNA15. Probably interacts with the phosphorylated CTD domain of RPB1/RNA polymerase II.

The protein localises to the nucleus. Its subcellular location is the cytoplasm. Its function is as follows. Component of the cleavage factor IA (CFIA) complex, which is involved in the endonucleolytic cleavage during polyadenylation-dependent pre-mRNA 3'-end formation and cooperates with the cleavage factor NAB4/CFIB and the cleavage and polyadenylation factor (CPF) complex. This chain is mRNA 3'-end-processing protein RNA14 (RNA14), found in Saccharomyces cerevisiae (strain ATCC 204508 / S288c) (Baker's yeast).